Reading from the N-terminus, the 396-residue chain is Ribosomal RNA large subunit methyltransferase I (396 aa).

The PUA domain occupies 2–81 (SVRLVLTKGR…ETIDIAFFTR (80 aa)).

It belongs to the methyltransferase superfamily. RlmI family.

The protein localises to the cytoplasm. The enzyme catalyses cytidine(1962) in 23S rRNA + S-adenosyl-L-methionine = 5-methylcytidine(1962) in 23S rRNA + S-adenosyl-L-homocysteine + H(+). Its function is as follows. Specifically methylates the cytosine at position 1962 (m5C1962) of 23S rRNA. The protein is Ribosomal RNA large subunit methyltransferase I of Enterobacter sp. (strain 638).